We begin with the raw amino-acid sequence, 437 residues long: RNA-binding motif, single-stranded-interacting protein 3 (437 aa).

The interval 28-57 (YAPAPHPMAPPSPSTNSSSNNSSNNSSGEQ) is disordered. The segment covering 31–40 (APHPMAPPSP) has biased composition (pro residues). The span at 41-54 (STNSSSNNSSNNSS) shows a compositional bias: low complexity. RRM domains lie at 61–134 (TNLY…MAKQ) and 140–225 (TNLY…FADG). Positions 399 to 422 (TSPQTVAPSSQDTSGQQQQIAVDT) are enriched in polar residues. The tract at residues 399–437 (TSPQTVAPSSQDTSGQQQQIAVDTSNEHAPAYSYQQSKP) is disordered.

In terms of tissue distribution, expressed in fetal brain, fetal lung, fetal liver, heart, brain, placenta, lung, liver, muscle, kidney and pancreas.

It is found in the cytoplasm. In terms of biological role, binds poly(A) and poly(U) oligoribonucleotides. This Homo sapiens (Human) protein is RNA-binding motif, single-stranded-interacting protein 3 (RBMS3).